Reading from the N-terminus, the 75-residue chain is Small ribosomal subunit protein bS18c (75 aa).

Belongs to the bacterial ribosomal protein bS18 family. Part of the 30S ribosomal subunit.

It localises to the plastid. The protein resides in the chloroplast. In Anthoceros angustus (Hornwort), this protein is Small ribosomal subunit protein bS18c (rps18).